The sequence spans 436 residues: GTPase Obg (436 aa).

The region spanning S2–L160 is the Obg domain. One can recognise an OBG-type G domain in the interval A161–A338. GTP contacts are provided by residues G167 to S174, F192 to V196, D214 to G217, N284 to D287, and S319 to I321. Mg(2+)-binding residues include S174 and T194. The region spanning G358–D436 is the OCT domain.

This sequence belongs to the TRAFAC class OBG-HflX-like GTPase superfamily. OBG GTPase family. In terms of assembly, monomer. Mg(2+) is required as a cofactor.

It is found in the cytoplasm. In terms of biological role, an essential GTPase which binds GTP, GDP and possibly (p)ppGpp with moderate affinity, with high nucleotide exchange rates and a fairly low GTP hydrolysis rate. Plays a role in control of the cell cycle, stress response, ribosome biogenesis and in those bacteria that undergo differentiation, in morphogenesis control. The chain is GTPase Obg from Streptococcus mutans serotype c (strain ATCC 700610 / UA159).